The primary structure comprises 339 residues: Ornithine utilization regulator (339 aa).

The region spanning 241–338 is the HTH araC/xylS-type domain; that stretch reads TRVRRLLLAR…GKLPSDYREA (98 aa). 2 DNA-binding regions (H-T-H motif) span residues 258–279 and 305–328; these read EQAARELHTSGRSLRRHLSSLG and LYEIALLLGFNDSSNFRRAFRKWT.

Its function is as follows. Probably activates the ArgJ gene that encodes ornithine acetyltransferase. Binds to its own promoter-operator region. Probably binds ornithine. The sequence is that of Ornithine utilization regulator (oruR) from Pseudomonas aeruginosa (strain ATCC 15692 / DSM 22644 / CIP 104116 / JCM 14847 / LMG 12228 / 1C / PRS 101 / PAO1).